Consider the following 489-residue polypeptide: Rhamnulokinase (489 aa).

13 to 17 provides a ligand contact to ATP; sequence ASSGR. Cys-68 and Cys-222 are oxidised to a cystine. Substrate contacts are provided by residues Gly-83 and 236–238; that span reads HDT. Residue Asp-237 is the Proton acceptor of the active site. Thr-259 provides a ligand contact to ATP. Asn-296 lines the substrate pocket. An ATP-binding site is contributed by Gln-304. Cys-353 and Cys-370 form a disulfide bridge. Gly-402 serves as a coordination point for ATP. Cys-413 and Cys-417 form a disulfide bridge.

The protein belongs to the rhamnulokinase family. In terms of assembly, monomer. Mg(2+) serves as cofactor.

The enzyme catalyses L-rhamnulose + ATP = L-rhamnulose 1-phosphate + ADP + H(+). The protein operates within carbohydrate degradation; L-rhamnose degradation; glycerone phosphate from L-rhamnose: step 2/3. In terms of biological role, involved in the catabolism of L-rhamnose (6-deoxy-L-mannose). Catalyzes the transfer of the gamma-phosphate group from ATP to the 1-hydroxyl group of L-rhamnulose to yield L-rhamnulose 1-phosphate. This is Rhamnulokinase from Escherichia coli O139:H28 (strain E24377A / ETEC).